The sequence spans 609 residues: UvrABC system protein C (609 aa).

Residues 16 to 94 (HLPGVYRHLD…IKSLRPRYNI (79 aa)) enclose the GIY-YIG domain. The region spanning 203-238 (REVMDEIEARMLQASTELRFEEAAVLRDQMGSLSKV) is the UVR domain.

The protein belongs to the UvrC family. As to quaternary structure, interacts with UvrB in an incision complex.

It localises to the cytoplasm. Its function is as follows. The UvrABC repair system catalyzes the recognition and processing of DNA lesions. UvrC both incises the 5' and 3' sides of the lesion. The N-terminal half is responsible for the 3' incision and the C-terminal half is responsible for the 5' incision. The polypeptide is UvrABC system protein C (Bordetella pertussis (strain Tohama I / ATCC BAA-589 / NCTC 13251)).